The primary structure comprises 251 residues: MARADGRSDDALREVRITRGYQDWPAGSVLVEFGRTRVLCAASVQEGVPRWRAGSGLGWVTAEYAMLPSSTNTRSARESVKGRIGGRTHEISRLVGRSLRACIDLAALGENTIALDCDVIQADGGTRTAAITGAYVALADAITWLSAAGRLTDPKPLSCSIAAVSVGVVDGRVRLDLPYEEDSRAEVDMNVVATDHGTLVEVQGTGEGATFTRSTMDKMIDFALAGCSELSRIQSEALAAPYPGELPGGAA.

Phosphate contacts are provided by residues Arg-87 and 125–127 (GTR).

It belongs to the RNase PH family. Homohexameric ring arranged as a trimer of dimers.

It catalyses the reaction tRNA(n+1) + phosphate = tRNA(n) + a ribonucleoside 5'-diphosphate. Phosphorolytic 3'-5' exoribonuclease that plays an important role in tRNA 3'-end maturation. Removes nucleotide residues following the 3'-CCA terminus of tRNAs; can also add nucleotides to the ends of RNA molecules by using nucleoside diphosphates as substrates, but this may not be physiologically important. Probably plays a role in initiation of 16S rRNA degradation (leading to ribosome degradation) during starvation. The sequence is that of Ribonuclease PH from Saccharopolyspora erythraea (strain ATCC 11635 / DSM 40517 / JCM 4748 / NBRC 13426 / NCIMB 8594 / NRRL 2338).